A 607-amino-acid polypeptide reads, in one-letter code: Autophagy-related protein 16-1 (607 aa).

Residues 13 to 43 (WKRHIAEELRRRDRLQRQAFEEIILQYTKLL) form an interaction with ATG5 region. Positions 79–230 (DSQLQEMAQL…QKELAEAAKE (152 aa)) form a coiled coil. The residue at position 139 (S139) is a Phosphoserine. The interval 207–230 (AENEKDSRRRQARLQKELAEAAKE) is WIPI2-binding. Residues 230–242 (EPLPVEQDDDIEV) are RB1CC1-binding. 2 positions are modified to phosphoserine: S269 and S287. Positions 296–299 (DIMD) match the Caspase cleavage motif. WD repeat units follow at residues 320–359 (AHDG…CEFK), 364–403 (GSNA…LRHT), 406–445 (GHSG…CIKT), 447–484 (FAGS…VVRE), 486–525 (ELLG…VKQT), 532–573 (KCGS…KVLS), and 575–607 (QHSS…WAQP).

The protein belongs to the WD repeat ATG16 family. In terms of assembly, homodimer. Homooligomer. Heterooligomer with ATG16L2. Interacts with WIPI1. Interacts with WIPI2. Interacts with RB1CC1; the interaction is required for ULK1 complex-dependent autophagy. Interacts with ATG5. Part of the minor complex composed of 4 sets of ATG12-ATG5 and ATG16L1 (400 kDa); this complex interacts with ATG3 leading to disruption of ATG7 interaction and promotion of ATG8-like proteins lipidation. Part of the major complex composed of 8 sets of ATG12-ATG5 and ATG16L1 (800 kDa). Interacts with RAB33B (GTP- and GDP-bound forms); the complex consists of a tetramer where two RAB33B molecules bind independently one molecule of the ATG16L1 homodimer; the interaction promotes ATG12-ATG5-ATG16L1 complex recruitment to phagophores. Interacts (via WD repeats) with TMEM59; the interaction mediates unconventional autophagic activity of TMEM59. Interacts with TLR2. Interacts (via WD repeats) with MEFV. Interacts (via N-terminal) with CLTC. Interacts with NOD1. Interacts with NOD2. Interacts with TUFM. Interacts with TRIM16. Interacts (via WD repeats) with SPATA33. Interacts with Irgm1. Proteolytic cleavage by activated CASP3 leads to degradation and may regulate autophagy upon cellular stress and apoptotic stimuli. In terms of processing, phosphorylation at Ser-139 promotes association with the ATG12-ATG5 conjugate to form the ATG12-ATG5-ATG16L1 complex. In terms of tissue distribution, widely expressed. Expressed in the testis and sperm midpiece (at protein level). Expressed in liver. As to expression, highly expressed in liver. In terms of tissue distribution, expressed in brain.

It is found in the cytoplasm. It localises to the preautophagosomal structure membrane. The protein resides in the endosome membrane. Its subcellular location is the lysosome membrane. Plays an essential role in both canonical and non-canonical autophagy: interacts with ATG12-ATG5 to mediate the lipidation to ATG8 family proteins (MAP1LC3A, MAP1LC3B, MAP1LC3C, GABARAPL1, GABARAPL2 and GABARAP). Acts as a molecular hub, coordinating autophagy pathways via distinct domains that support either canonical or non-canonical signaling. During canonical autophagy, interacts with ATG12-ATG5 to mediate the conjugation of phosphatidylethanolamine (PE) to ATG8 proteins, to produce a membrane-bound activated form of ATG8. Thereby, controls the elongation of the nascent autophagosomal membrane. As part of the ATG8 conjugation system with ATG5 and ATG12, required for recruitment of LRRK2 to stressed lysosomes and induction of LRRK2 kinase activity in response to lysosomal stress. Also involved in non-canonical autophagy, a parallel pathway involving conjugation of ATG8 proteins to single membranes at endolysosomal compartments, probably by catalyzing conjugation of phosphatidylserine (PS) to ATG8. Non-canonical autophagy plays a key role in epithelial cells to limit lethal infection by influenza A (IAV) virus. Regulates mitochondrial antiviral signaling (MAVS)-dependent type I interferon (IFN-I) production. Negatively regulates NOD1- and NOD2-driven inflammatory cytokine response. Instead, promotes an autophagy-dependent antibacterial pathway together with NOD1 or NOD2. Plays a role in regulating morphology and function of Paneth cell. The protein is Autophagy-related protein 16-1 of Mus musculus (Mouse).